The sequence spans 429 residues: Gamma-glutamyl phosphate reductase (429 aa).

It belongs to the gamma-glutamyl phosphate reductase family.

It localises to the cytoplasm. It catalyses the reaction L-glutamate 5-semialdehyde + phosphate + NADP(+) = L-glutamyl 5-phosphate + NADPH + H(+). The protein operates within amino-acid biosynthesis; L-proline biosynthesis; L-glutamate 5-semialdehyde from L-glutamate: step 2/2. In terms of biological role, catalyzes the NADPH-dependent reduction of L-glutamate 5-phosphate into L-glutamate 5-semialdehyde and phosphate. The product spontaneously undergoes cyclization to form 1-pyrroline-5-carboxylate. The sequence is that of Gamma-glutamyl phosphate reductase from Methylocella silvestris (strain DSM 15510 / CIP 108128 / LMG 27833 / NCIMB 13906 / BL2).